Reading from the N-terminus, the 584-residue chain is Pectinesterase 1 (584 aa).

Residues 1–42 form the signal peptide; that stretch reads MTHIKEFFTKLSESSSNQNISNIPKKKKKLFLALFATLLVVA. N-linked (GlcNAc...) asparagine glycosylation is found at Asn-108, Asn-129, and Asn-226. Residues Thr-348 and Gln-378 each contribute to the substrate site. The active-site Proton donor is the Asp-401. Cys-415 and Cys-435 are joined by a disulfide. The Nucleophile role is filled by Asp-422. Residues Arg-490 and Trp-492 each contribute to the substrate site.

The protein in the N-terminal section; belongs to the PMEI family. It in the C-terminal section; belongs to the pectinesterase family. Expressed at high levels in flower buds, shoots and young leaves, and at lower levels in young fruit, young bark and juice vesicles. Not expressed at significant levels in leaf abscission zones following ethylene treatment or in mature leaves. In fruit abscission zones, expression was initially undetectable but increased markedly following ethylene treatment.

It localises to the secreted. It is found in the cell wall. It catalyses the reaction [(1-&gt;4)-alpha-D-galacturonosyl methyl ester](n) + n H2O = [(1-&gt;4)-alpha-D-galacturonosyl](n) + n methanol + n H(+). It participates in glycan metabolism; pectin degradation; 2-dehydro-3-deoxy-D-gluconate from pectin: step 1/5. Acts in the modification of cell walls via demethylesterification of cell wall pectin. The polypeptide is Pectinesterase 1 (PECS-1.1) (Citrus sinensis (Sweet orange)).